A 257-amino-acid chain; its full sequence is Protein YIPF5 (257 aa).

The Cytoplasmic segment spans residues 1 to 124 (MSGFDNLNSG…RAADGSIMNE (124 aa)). An interaction with Sec23 region spans residues 75-106 (PTTPQPFYGDSFEEEPPLLEELGINFDHIWQK). Residues 125-145 (TDLAGPVVFCLAFGATLLLAG) traverse the membrane as a helical segment. A topological domain (lumenal) is located at residue lysine 146. Residues 147–167 (IQFGYVYGISAIGCLGMFCLL) form a helical membrane-spanning segment. The Cytoplasmic portion of the chain corresponds to 168–173 (NLMSMT). A helical transmembrane segment spans residues 174 to 194 (GVSFGCVASVLGYCLLPMILL). Topologically, residues 195–196 (SS) are lumenal. A helical transmembrane segment spans residues 197–217 (FAVVFSLQGMVGILLTATIIG). The Cytoplasmic portion of the chain corresponds to 218 to 236 (WCSFSASKIFISALAMDGQ). Residues 237-257 (QLLVAYPCALLYGVFALISVF) traverse the membrane as a helical segment.

This sequence belongs to the YIP1 family. Interacts with the COPII coat components Sec23 (SEC23A and/or SEC23B) and Sec24 (SEC24A and/or SEC24B). Interacts with YIF1A. May interact with RAB1A. Interacts with YIPF3 and YIPF4. In terms of tissue distribution, ubiquitously expressed.

The protein resides in the golgi apparatus. It is found in the cis-Golgi network membrane. It localises to the cytoplasmic vesicle. The protein localises to the COPII-coated vesicle. Its subcellular location is the endoplasmic reticulum membrane. Plays a role in transport between endoplasmic reticulum and Golgi. In pancreatic beta cells, required to transport proinsulin from endoplasmic reticulum into the Golgi. The sequence is that of Protein YIPF5 from Mus musculus (Mouse).